We begin with the raw amino-acid sequence, 338 residues long: Aspartate carbamoyltransferase catalytic subunit (338 aa).

Residues arginine 72 and threonine 73 each coordinate carbamoyl phosphate. Lysine 100 contacts L-aspartate. Residues arginine 122, histidine 152, and glutamine 155 each coordinate carbamoyl phosphate. Residues arginine 186 and arginine 243 each coordinate L-aspartate. Positions 284 and 285 each coordinate carbamoyl phosphate.

It belongs to the aspartate/ornithine carbamoyltransferase superfamily. ATCase family. As to quaternary structure, heterododecamer (2C3:3R2) of six catalytic PyrB chains organized as two trimers (C3), and six regulatory PyrI chains organized as three dimers (R2).

The enzyme catalyses carbamoyl phosphate + L-aspartate = N-carbamoyl-L-aspartate + phosphate + H(+). Its pathway is pyrimidine metabolism; UMP biosynthesis via de novo pathway; (S)-dihydroorotate from bicarbonate: step 2/3. Functionally, catalyzes the condensation of carbamoyl phosphate and aspartate to form carbamoyl aspartate and inorganic phosphate, the committed step in the de novo pyrimidine nucleotide biosynthesis pathway. The sequence is that of Aspartate carbamoyltransferase catalytic subunit from Acinetobacter baumannii (strain SDF).